The following is a 1325-amino-acid chain: uncharacterized protein (1325 aa).

The N-terminal stretch at 1–27 is a signal peptide; it reads MHTFTRKVKWPFMFTAIGLTFGIVAVA. Cys-28 carries N-palmitoyl cysteine lipidation. Residue Cys-28 is the site of S-diacylglycerol cysteine attachment. Disordered stretches follow at residues 379 to 402 and 430 to 464; these read RAAS…GTTQ and NTNA…TGNS. Over residues 436 to 448 the composition is skewed to gly residues; sequence TGGGGSGGGGGTS. Over residues 449-464 the composition is skewed to low complexity; sequence TGSSTGSSTETTTGNS.

It belongs to the MG307/MG309/MG338 family.

It localises to the cell membrane. This is an uncharacterized protein from Mycoplasma pneumoniae (strain ATCC 29342 / M129 / Subtype 1) (Mycoplasmoides pneumoniae).